The chain runs to 816 residues: Fibroblast growth factor receptor 1 (816 aa).

The signal sequence occupies residues 1–23; sequence MLSWRHLVFWAMLVMATLSAARP. Residues 24–374 lie on the Extracellular side of the membrane; it reads APTLPEQVSP…VIMTSPLYLE (351 aa). An Ig-like C2-type 1 domain is found at 25 to 118; sequence PTLPEQVSPK…ETTFFAVNVS (94 aa). The cysteines at positions 54 and 100 are disulfide-linked. Residues asparagine 76 and asparagine 116 are each glycosylated (N-linked (GlcNAc...) asparagine). The tract at residues 118-152 is disordered; sequence SDRIPSVEDDDDDDEKSSSEEKEAENSKPNPVAPF. A compositionally biased stretch (basic and acidic residues) spans 133-143; sequence KSSSEEKEAEN. 2 consecutive Ig-like C2-type domains span residues 156 to 244 and 253 to 355; these read PEKM…YQLD and PILQ…AWLT. Cysteines 176 and 228 form a disulfide. Asparagine 238, asparagine 262, asparagine 294, asparagine 315, and asparagine 328 each carry an N-linked (GlcNAc...) asparagine glycan. Cysteine 275 and cysteine 339 are oxidised to a cystine. The helical transmembrane segment at 375–395 threads the bilayer; that stretch reads IIIYCTGAFLISCMLVTVIIY. The Cytoplasmic segment spans residues 396 to 816; that stretch reads KMKNTTKKTD…QHANGGLKKR (421 aa). The residue at position 459 (tyrosine 459) is a Phosphotyrosine; by autocatalysis. In terms of domain architecture, Protein kinase spans 474–763; that stretch reads LILGKPLGEG…VAMTSNQEYL (290 aa). ATP contacts are provided by residues 480–486, lysine 510, 558–560, and asparagine 564; these read LGEGCFG and EYA. Phosphotyrosine; by autocatalysis occurs at positions 579 and 581. Catalysis depends on aspartate 619, which acts as the Proton acceptor. Residues arginine 623 and aspartate 637 each coordinate ATP. Phosphotyrosine; by autocatalysis occurs at positions 649, 650, 726, and 762. A disordered region spans residues 776 to 816; the sequence is FPDTRSSTCSSGEDSVFSHDPLPDEPCLPKYQHANGGLKKR. A compositionally biased stretch (polar residues) spans 779-788; the sequence is TRSSTCSSGE.

Belongs to the protein kinase superfamily. Tyr protein kinase family. Fibroblast growth factor receptor subfamily. Monomer. Homodimer after ligand binding. In terms of processing, autophosphorylated. Binding of FGF family members together with heparan sulfate proteoglycan or heparin promotes receptor dimerization and autophosphorylation on tyrosine residues. Autophosphorylation occurs in trans between the two FGFR molecules present in the dimer and proceeds in a highly ordered manner. Phosphotyrosine residues provide docking sites for interacting proteins and so are crucial for FGFR1 function and its regulation. Post-translationally, ubiquitinated. FGFR1 is rapidly ubiquitinated after autophosphorylation, leading to internalization and degradation. N-glycosylated in the endoplasmic reticulum. The N-glycan chains undergo further maturation to an Endo H-resistant form in the Golgi apparatus.

Its subcellular location is the cell membrane. The protein resides in the nucleus. It is found in the cytoplasm. The protein localises to the cytosol. It localises to the cytoplasmic vesicle. It catalyses the reaction L-tyrosyl-[protein] + ATP = O-phospho-L-tyrosyl-[protein] + ADP + H(+). Its activity is regulated as follows. Present in an inactive conformation in the absence of bound ligand. Ligand binding leads to dimerization and activation by sequential autophosphorylation on tyrosine residues. Its function is as follows. Tyrosine-protein kinase that acts as a cell-surface receptor for fibroblast growth factors and plays an essential role in the regulation of embryonic development, cell proliferation, differentiation and migration. Required for normal mesoderm patterning and normal skeletogenesis. Phosphorylates PLCG1, FRS2, GAB1 and SHB. Ligand binding leads to the activation of several signaling cascades. Activation of PLCG1 leads to the production of the cellular signaling molecules diacylglycerol and inositol-1,4,5-trisphosphate. Phosphorylation of FRS2 triggers recruitment of GRB2, GAB1, PIK3R1 and SOS1, and mediates activation of RAS, MAPK1/ERK2, MAPK3/ERK1 and the MAP kinase signaling pathway, as well as of the AKT1 signaling pathway. Promotes phosphorylation of SHC1, STAT1 and PTPN11/SHP2. In the nucleus, enhances RPS6KA1 and CREB1 activity and contributes to the regulation of transcription. FGFR1 signaling is down-regulated by ubiquitination, internalization and degradation. In Pleurodeles waltl (Iberian ribbed newt), this protein is Fibroblast growth factor receptor 1 (FGFR1).